Reading from the N-terminus, the 96-residue chain is Myticin-A (96 aa).

The N-terminal stretch at 1 to 20 (MKATILLAVLVAVFVAGTEA) is a signal peptide. A propeptide spans 61-96 (VNNPFRVNQVAKSINDLDYTPIMKSMENLDNGMDML) (removed in mature form).

Contains four disulfide bonds. In terms of tissue distribution, hemocytes.

It localises to the secreted. Bacteriolytic activity against Gram-positive bacteria M.luteus, B.megaterium and A.viridans. The chain is Myticin-A from Mytilus galloprovincialis (Mediterranean mussel).